The chain runs to 160 residues: Sec-independent protein translocase protein TatB (160 aa).

A helical transmembrane segment spans residues 1–21; it reads MFGMGFFEILVVLVVAIIFLG. The disordered stretch occupies residues 118 to 160; it reads HLNEEVSNEEALNKEVSSDESPKEVQLATDNNTKEHDKEKEHV. 2 stretches are compositionally biased toward basic and acidic residues: residues 128 to 140 and 149 to 160; these read ALNKEVSSDESPK and NTKEHDKEKEHV.

Belongs to the TatB family. The Tat system comprises two distinct complexes: a TatABC complex, containing multiple copies of TatA, TatB and TatC subunits, and a separate TatA complex, containing only TatA subunits. Substrates initially bind to the TatABC complex, which probably triggers association of the separate TatA complex to form the active translocon.

It localises to the cell inner membrane. Part of the twin-arginine translocation (Tat) system that transports large folded proteins containing a characteristic twin-arginine motif in their signal peptide across membranes. Together with TatC, TatB is part of a receptor directly interacting with Tat signal peptides. TatB may form an oligomeric binding site that transiently accommodates folded Tat precursor proteins before their translocation. The protein is Sec-independent protein translocase protein TatB of Helicobacter pylori (strain HPAG1).